The chain runs to 372 residues: Anhydro-N-acetylmuramic acid kinase (372 aa).

Position 13–20 (13–20 (GTSMDGID)) interacts with ATP.

It belongs to the anhydro-N-acetylmuramic acid kinase family.

It carries out the reaction 1,6-anhydro-N-acetyl-beta-muramate + ATP + H2O = N-acetyl-D-muramate 6-phosphate + ADP + H(+). It participates in amino-sugar metabolism; 1,6-anhydro-N-acetylmuramate degradation. It functions in the pathway cell wall biogenesis; peptidoglycan recycling. Catalyzes the specific phosphorylation of 1,6-anhydro-N-acetylmuramic acid (anhMurNAc) with the simultaneous cleavage of the 1,6-anhydro ring, generating MurNAc-6-P. Is required for the utilization of anhMurNAc either imported from the medium or derived from its own cell wall murein, and thus plays a role in cell wall recycling. This chain is Anhydro-N-acetylmuramic acid kinase, found in Rhizobium johnstonii (strain DSM 114642 / LMG 32736 / 3841) (Rhizobium leguminosarum bv. viciae).